Reading from the N-terminus, the 158-residue chain is uncharacterized protein (158 aa).

The HTH hxlR-type domain maps to 13-110; sequence ESVGRALELV…WGDEYLPRPE (98 aa).

This is an uncharacterized protein from Mycobacterium tuberculosis (strain ATCC 25618 / H37Rv).